We begin with the raw amino-acid sequence, 346 residues long: MNIKSLLLGSAAALVAASGAQAADAIVAPEPEAVEYVRVCDAYGAGYFYIPGTETCLRISGYVRYDVKGGDDVYTGSDRKGWDKGARFALMFNTNSETELGTLGTYTQLRFNYTSNNSRHDGQYGDFSDDRDVADGSVSTGTDLQFAYITLGGFKVGIDESEFHTFTGYLGDIINDDVISAGSYRTGKIAYTFTGGNGFSAVIALEQGGEDVDNDYTIDGYMPHVVGGLKYAGGWGSIAGVVAYDSVIEEWATKVRGDVNITDRFSVWLQGAYSSAATPNQNYGQWGGDWAVWGGAKFIATEKATFNLQAAHDDWGKTAVTANVAYQLVPGFTITPEVSYTKFGGE.

The first 22 residues, 1 to 22 (MNIKSLLLGSAAALVAASGAQA), serve as a signal peptide directing secretion.

The protein belongs to the alphaproteobacteria porin family. In terms of assembly, monomer.

The protein localises to the cell outer membrane. Forms passive diffusion pores that allow small molecular weight hydrophilic materials across the outer membrane. This Brucella ovis protein is Porin Omp2a (omp2a).